The chain runs to 619 residues: Chaperone protein HscA homolog (619 aa).

This sequence belongs to the heat shock protein 70 family.

Its function is as follows. Chaperone involved in the maturation of iron-sulfur cluster-containing proteins. Has a low intrinsic ATPase activity which is markedly stimulated by HscB. This is Chaperone protein HscA homolog from Shewanella frigidimarina (strain NCIMB 400).